A 363-amino-acid polypeptide reads, in one-letter code: 1,2-Dihydrovomilenine reductase (363 aa).

The 329-residue stretch at 24 to 352 folds into the Enoyl reductase (ER) domain; that stretch reads GILSPFKFSR…KGDVRYRFVI (329 aa). Position 51 (cysteine 51) interacts with Zn(2+). Serine 53 serves as a coordination point for NADP(+). Zn(2+) contacts are provided by aspartate 54, glutamate 74, cysteine 104, cysteine 107, cysteine 110, and cysteine 118. 12 residues coordinate NADP(+): leucine 193, glycine 195, leucine 196, serine 215, threonine 216, serine 217, lysine 220, lysine 221, valine 278, alanine 280, threonine 302, and arginine 349.

This sequence belongs to the zinc-containing alcohol dehydrogenase family. Class-P subfamily. Homodimer. The cofactor is Zn(2+). As to expression, mainly expressed in mature roots and, to a lower extent, in stems and leaves.

It localises to the cytoplasm. The catalysed reaction is 17-O-acetylnorajmaline + NADP(+) = (2R)-1,2-dihydrovomilenine + NADPH + 2 H(+). It catalyses the reaction (20S)-19,20-dihydrovomilenine + NADP(+) = vomilenine + NADPH + H(+). It functions in the pathway alkaloid biosynthesis; ajmaline biosynthesis. Alcohol dehydrogenase involved in the biosynthesis of ajmaline-type monoterpenoid indole alkaloids (MIAs) natural products, important plant-derived pharmaceuticals used in the therapy of heart disorders. Catalyzes the conversion of 1,2-dihydrovomilenine to 17-O-acetylnorajmaline, an intermediate chemical in the biosynthesis of ajmaline. Also able, with a lower efficiency, to convert vomilenine into 19,20-dihydrovomilenine. The protein is 1,2-Dihydrovomilenine reductase of Rauvolfia serpentina (Serpentine wood).